The following is a 311-amino-acid chain: Ribosomal RNA small subunit methyltransferase H (311 aa).

S-adenosyl-L-methionine is bound by residues 34 to 36, aspartate 54, phenylalanine 80, aspartate 104, and glutamine 111; that span reads GGH.

The protein belongs to the methyltransferase superfamily. RsmH family.

The protein resides in the cytoplasm. It carries out the reaction cytidine(1402) in 16S rRNA + S-adenosyl-L-methionine = N(4)-methylcytidine(1402) in 16S rRNA + S-adenosyl-L-homocysteine + H(+). In terms of biological role, specifically methylates the N4 position of cytidine in position 1402 (C1402) of 16S rRNA. The chain is Ribosomal RNA small subunit methyltransferase H from Teredinibacter turnerae (strain ATCC 39867 / T7901).